A 143-amino-acid chain; its full sequence is MQLNDLKPAKGARHQKLRVGRGIGSGKGKTAGRGHKGQHSRAGGYHKVGFEGGQMPLQRRVPKFGFTSRKELISAEVRLGELNKISGDVVDLASLKAANIISRQIKRVKIFAAGKLEKPVTIRGLRVTKGVKAAIEAAGGKIE.

The segment at 20 to 52 (GRGIGSGKGKTAGRGHKGQHSRAGGYHKVGFEG) is disordered. Residues 30 to 39 (TAGRGHKGQH) show a composition bias toward basic residues.

Belongs to the universal ribosomal protein uL15 family. In terms of assembly, part of the 50S ribosomal subunit.

Functionally, binds to the 23S rRNA. This is Large ribosomal subunit protein uL15 from Coxiella burnetii (strain CbuK_Q154) (Coxiella burnetii (strain Q154)).